The chain runs to 130 residues: MYGVLAHYYSFISSPSVMVNFKHHNAVQLLCARTRDGTAGWERLTHHASYHANYGAYAVLMATSQRKSLVLHRYSAVTAVALQLMPVEMLRRLDQSDWVRGAWIVSETFPTSDPKGFWSDDDSPMGGSED.

As to quaternary structure, interacts with host DDB1; this interaction promotes STAT2 degradation.

Plays a role in the inhibition of host innate immunity by exploiting host DDB1-cullin RING ubiquitin ligases (CRLs). Mechanistically, recruits host DDB1 via a DCAF-like interaction motif to antagonize IFN signaling by STAT2 degradation. This chain is Protein UL145 (UL145), found in Homo sapiens (Human).